The chain runs to 348 residues: MKKTIVALAVAAVAATSANAATVYNQDGTKVDVNGSVRLLLKKEKDKRGDLMDNGSRVSFKASHDLGEGLSALAYAELRFSKDVKNKDGEVIKQPIGNNVHAKRLYAGFAYEGVGTLTFGNQLTIGDDVGVSDYTYFLGGINNLLSSGEKAINFKSAEFNGLTFGGAYVFSDDFDKNGLRDGRGFVVAGLYNRKIGDVGFAFEAGYSQKYVKQEVASVLPPPPGSVTVYKDEKEKAFMVGAELSYAGLALGVDYAQSKVTNVDGKKRALEVGLNYDINDKAKVYTDFIWAKEGPKGATTRDRSIILGAGYKLHKQVETFVEGGWGREKDANGVTTKDNVVGVGLRVHF.

The first 20 residues, 1 to 20 (MKKTIVALAVAAVAATSANA), serve as a signal peptide directing secretion.

In terms of assembly, disulfide bond interactions within and between MOMP molecules and other components form high molecular-weight oligomers.

The protein localises to the cell outer membrane. In terms of biological role, structural rigidity of the outer membrane of elementary bodies and porin forming, permitting diffusion of solutes through the intracellular reticulate body membrane. The protein is Major outer membrane protein (ompH) of Pasteurella multocida (strain Pm70).